The chain runs to 402 residues: Acetate kinase (402 aa).

Mg(2+) is bound at residue asparagine 10. Position 17 (lysine 17) interacts with ATP. Substrate is bound at residue arginine 89. Aspartate 148 acts as the Proton donor/acceptor in catalysis. Residues 208 to 212 (HLGNG), 283 to 285 (DCR), and 334 to 338 (GIGEN) contribute to the ATP site. A Mg(2+)-binding site is contributed by glutamate 389.

Belongs to the acetokinase family. In terms of assembly, homodimer. Requires Mg(2+) as cofactor. The cofactor is Mn(2+).

The protein resides in the cytoplasm. The catalysed reaction is acetate + ATP = acetyl phosphate + ADP. Its pathway is metabolic intermediate biosynthesis; acetyl-CoA biosynthesis; acetyl-CoA from acetate: step 1/2. In terms of biological role, catalyzes the formation of acetyl phosphate from acetate and ATP. Can also catalyze the reverse reaction. The chain is Acetate kinase from Actinobacillus pleuropneumoniae serotype 7 (strain AP76).